The sequence spans 496 residues: MYPHFCAFVMTSTRNCLTWAASQLAPTGEGDELSGQEDAFRSWAVQTFRAACETFDVRSKHCIQIPKRYTSNATWEPEQYKLTQSPEPLDLNKALSSIHAKNLFTMRLRSLQNLHSEKSSRTTLLVQLTFEGSRGPSYLPGEHLGIFPGNQTGLVQGILERVVDCSSPDQTVCLEVHDESGSYWVKDKRLPPCSLRQALTYFLDITTPPTQLQLHKLARFATEETHRQRLEALCQPSEYNDWKFSNNPTFLEVLEEFPSLRVPAAFLLSQLPILKPRYYSISSSQDHTPSEVHLTVAVVTYRTRDGQGPLHHGVCSTWINNLKPEDPVPCFVRSVSGFQLPEDPSQPCILIGPGTGIAPFRSFWQQRLHDSQHRGLKGGRMTLVFGCRHPEEDHLYQEEMQEMVRKGVLFQVHTGYSRLPGKPKVYVQDILQKELADEVFSVLHGEQGHLYVCGDVRMARDVATTLKKLVAAKLNLSEEQVEDYFFQLKYHEDIFG.

Residues Cys6, Glu32, and Gln36 each coordinate FMN. One can recognise an FAD-binding FR-type domain in the interval 101–341 (KNLFTMRLRS…VRSVSGFQLP (241 aa)). Arg121 lines the NADP(+) pocket. Positions 143, 277, 279, 280, 295, and 297 each coordinate FAD. Thr300 lines the NADP(+) pocket. The FAD site is built by Tyr301, Val314, Cys315, and Ser316. Residues Thr355, Arg388, Ser417, Arg418, Lys424, Tyr426, Gln428, and Asp461 each coordinate NADP(+).

It belongs to the NOS family. Homodimer. Interacts with NHERF1. Interacts with GAPDH; induced by oxidatively-modified low-densitity lipoprotein (LDL(ox)). Interacts with S100A8 and S100A9 to form the iNOS-S100A8/9 transnitrosylase complex. Interacts with SPSB1, SPSB2 and SPSB4. Interacts with ELOC and CUL5 in the presence of SPSB1 or SPSB2 or SPSB4. Forms a complex with ASL, ASS1 and HSP90AA1; the complex regulates cell-autonomous L-arginine synthesis and citrulline recycling while channeling extracellular L-arginine to nitric oxide synthesis pathway. Requires heme b as cofactor. The cofactor is FAD. FMN is required as a cofactor. (6R)-L-erythro-5,6,7,8-tetrahydrobiopterin serves as cofactor. In terms of processing, polyubiquitinated; mediated by SPSB1, SPSB2 and SPSB4, leading to proteasomal degradation.

The protein localises to the cytoplasm. Its subcellular location is the cytosol. The enzyme catalyses 2 L-arginine + 3 NADPH + 4 O2 + H(+) = 2 L-citrulline + 2 nitric oxide + 3 NADP(+) + 4 H2O. Its activity is regulated as follows. Not stimulated by calcium/calmodulin. Produces nitric oxide (NO) which is a messenger molecule with diverse functions throughout the body. In macrophages, NO mediates tumoricidal and bactericidal actions. Also has nitrosylase activity and mediates cysteine S-nitrosylation of cytoplasmic target proteins such PTGS2/COX2. As component of the iNOS-S100A8/9 transnitrosylase complex involved in the selective inflammatory stimulus-dependent S-nitrosylation of GAPDH implicated in regulation of the GAIT complex activity and probably multiple targets including ANXA5, EZR, MSN and VIM. Involved in inflammation, enhances the synthesis of pro-inflammatory mediators such as IL6 and IL8. This is Nitric oxide synthase, inducible (NOS2) from Oryctolagus cuniculus (Rabbit).